The primary structure comprises 489 residues: Anthranilate synthase component 1 1 (489 aa).

262–264 (PYS) lines the L-tryptophan pocket. The tract at residues 288 to 309 (DRIETEPIAGTRPRGETPDADD) is disordered. 297–298 (GT) contributes to the chorismate binding site. A compositionally biased stretch (basic and acidic residues) spans 300–309 (PRGETPDADD). Mg(2+) is bound at residue Glu324. Residues Tyr412, Arg432, 446-448 (GAG), and Gly448 contribute to the chorismate site. Glu461 contacts Mg(2+).

The protein belongs to the anthranilate synthase component I family. In terms of assembly, tetramer of two components I and two components II. Mg(2+) is required as a cofactor.

It catalyses the reaction chorismate + L-glutamine = anthranilate + pyruvate + L-glutamate + H(+). The protein operates within amino-acid biosynthesis; L-tryptophan biosynthesis; L-tryptophan from chorismate: step 1/5. This Haloarcula marismortui (strain ATCC 43049 / DSM 3752 / JCM 8966 / VKM B-1809) (Halobacterium marismortui) protein is Anthranilate synthase component 1 1 (trpE1).